A 913-amino-acid polypeptide reads, in one-letter code: Zinc finger protein 112 (913 aa).

In terms of domain architecture, KRAB spans 8 to 79 (VTFKDVAVVF…ETETPRDGCS (72 aa)). Lys256 participates in a covalent cross-link: Glycyl lysine isopeptide (Lys-Gly) (interchain with G-Cter in SUMO2). The segment at 258–280 (YPCTGYRKAFSNDSSSEVHQQFH) adopts a C2H2-type 1; degenerate zinc-finger fold. Residues 443-465 (YNSEECGNGFSLASHFQDLQIVH) form a C2H2-type 2; degenerate zinc finger. The C2H2-type 3; degenerate zinc finger occupies 471–493 (YKRYVCSNSFSHNLYLQGHPKIH). Residues 497–519 (KPRKEHGNGFNWSSKLKDHQRVH) form a C2H2-type 4; degenerate zinc finger. 13 consecutive C2H2-type zinc fingers follow at residues 525-547 (YKCNICGKGFNHRSVLNVHQRVH), 553-575 (YKCEECDKGFSRSSYLQAHQRVH), 581-603 (YKCEECGKGFSRNSYLQGHQRVH), 609-631 (YKCEECGKGFSRSSHLQGHQRVH), 637-659 (FKCEECGKGFSWSFNLQIHQRVH), 665-687 (YKCEECGKGFSKASTLLAHQRVH), 693-715 (YQCDECGKSFSQRSYLQSHQSVH), 721-743 (YICEVCGKGFSQRAYLQGHQRVH), 749-771 (YKCEMCGKGFSQSSRLEAHRRVH), 777-799 (YKCEVCTKGFSESSRLQAHQRVH), 805-827 (YKCEQCGKGFSGYSSLQAHHRVH), 833-855 (YKCEVCGKGFSQRSNLQAHQRVH), and 861-883 (YKCDACGKGFRWSSGLLIHQRVH). Lys890 participates in a covalent cross-link: Glycyl lysine isopeptide (Lys-Gly) (interchain with G-Cter in SUMO2).

The protein belongs to the krueppel C2H2-type zinc-finger protein family.

The protein resides in the nucleus. May be involved in transcriptional regulation. This is Zinc finger protein 112 (ZNF112) from Homo sapiens (Human).